The following is a 493-amino-acid chain: Alpha-amylase-related protein (493 aa).

Residues 1 to 19 (MFKFALALTLCLAGSLSLA) form the signal peptide. Gln20 is modified (pyrrolidone carboxylic acid). Cys47 and Cys103 are oxidised to a cystine. Ca(2+)-binding residues include Asn117, Gln168, and Asp177. The cysteines at positions 156 and 170 are disulfide-linked. Arg205 is a binding site for chloride. The Nucleophile role is filled by Asp207. His211 is a binding site for Ca(2+). The Proton donor role is filled by Glu244. Chloride contacts are provided by Asn307 and Arg342. 3 cysteine pairs are disulfide-bonded: Cys375-Cys381, Cys417-Cys440, and Cys447-Cys459.

It belongs to the glycosyl hydrolase 13 family. In terms of assembly, monomer. Ca(2+) serves as cofactor. Chloride is required as a cofactor.

It localises to the secreted. The catalysed reaction is Endohydrolysis of (1-&gt;4)-alpha-D-glucosidic linkages in polysaccharides containing three or more (1-&gt;4)-alpha-linked D-glucose units.. This chain is Alpha-amylase-related protein (Amyrel), found in Drosophila elegans (Fruit fly).